Reading from the N-terminus, the 887-residue chain is MPGIEQPVSRKNETLVKLSSLADEFVFNDEVQLNLQDVLQECVDTYQNYQDEVKKIKNMDHTESEKVSELCKSAYIYYKIVHNFITKVIPHLPEFEVATGPKASKLQAELIKIYYSLFSRLESDKKISYIKNIIIKHMDTQENNHSVESHEQVKLSNKKLPVNRDAIEIDKDSILQDIRYINGKRSGSGISCSELLSLMKMKEDSLLLIDVRPKLEYDAHHIKTKNIICIEPISFKESYSDQQIEKTSMIPSPKHEIQLFQRRSEFQYIILYTDLEEKSNFYFQQLKSLLEILLQRSFLRPIDDRKTKVLFLSDSLQNWIKNGGEIDKSQEVSKIRNRSISGSGPLLNSLSERKTIGAFPDINRNSTKQMPISPLPSLPGSERTVATPPNGSSTLGRINSPVTHYPKAPLINDSEFHLNINNNHSPPTHLPSKDNNPLASSMPIGSDHKPFMSPQNSLPLAPKPPTLESKNYNFISDRSNIIDQKQNRSRSLEPQLPPIPSTLIRKNSPEKTLSCNQMMDTSFTVGLENMGNSCYINCIIQCIFATTELIKIFLNGTYAKHINKQSKLGSKGVLSHNFAKLLKDMYEENSSKKIGKKHGAVKTLQFKMACASVNSLFKDASQQDCLEFCQFLLDGLHEDLNQCGANPPLKELSPEAEKMRENLSLRVASSIEWERYLTTDFSIIVDLFQGQYASQLRCKVCNRTSTTYQAFSVLSVPVPSGKSCGLLDCFIEFTKTENLEVDEQWFCPSCKKKQPSTKKLTITRLPRNLIIHLKRFDNMMNKNNIFVRYPQILDLTPFWANDSDGKLPPGITDEIPARGQVPPFNYRLYGAACHFGTLYGGHYTSYVDKGPEKGWIYFDDTVYRPVRFQNEFISPSAYVLFYHRITS.

The Rhodanese domain maps to 202–328; the sequence is KEDSLLLIDV…WIKNGGEIDK (127 aa). 2 disordered regions span residues 358–465 and 484–505; these read AFPD…PKPP and QKQN…TLIR. Over residues 387–402 the composition is skewed to polar residues; that stretch reads TPPNGSSTLGRINSPV. The USP domain occupies 525–885; the sequence is VGLENMGNSC…SAYVLFYHRI (361 aa). C534 functions as the Nucleophile in the catalytic mechanism. The Proton acceptor role is filled by H842.

This sequence belongs to the peptidase C19 family.

The protein localises to the cytoplasm. It is found in the late endosome membrane. It carries out the reaction Thiol-dependent hydrolysis of ester, thioester, amide, peptide and isopeptide bonds formed by the C-terminal Gly of ubiquitin (a 76-residue protein attached to proteins as an intracellular targeting signal).. Its activity is regulated as follows. RFU1 is an inhibitor of deubiquitination activity. Functionally, ubiquitin thioesterase that acts at the late endosome/prevacuolar compartment to recover ubiquitin from ubiquitinated membrane proteins en route to the vacuole. Also removes ubiquitin from soluble proteins targeted to proteasomes. Is essential to maintain a normal level of free ubiquitin. Required for promoting coordination of DNA replication and avoids DNA overreplication. The polypeptide is Ubiquitin carboxyl-terminal hydrolase 4 (DOA4) (Candida glabrata (strain ATCC 2001 / BCRC 20586 / JCM 3761 / NBRC 0622 / NRRL Y-65 / CBS 138) (Yeast)).